Reading from the N-terminus, the 474-residue chain is Dihydrolipoyl dehydrogenase (474 aa).

Residues 39–47 (EKDAYGGTC), K56, and A118 contribute to the FAD site. C47 and C52 form a disulfide bridge. NAD(+) contacts are provided by residues 186 to 190 (GGGYI), E209, and 275 to 278 (AVGR). FAD is bound by residues D318 and A326. The Proton acceptor role is filled by H450.

This sequence belongs to the class-I pyridine nucleotide-disulfide oxidoreductase family. As to quaternary structure, homodimer. FAD is required as a cofactor.

The protein resides in the cytoplasm. It carries out the reaction N(6)-[(R)-dihydrolipoyl]-L-lysyl-[protein] + NAD(+) = N(6)-[(R)-lipoyl]-L-lysyl-[protein] + NADH + H(+). This Halobacterium salinarum (strain ATCC 700922 / JCM 11081 / NRC-1) (Halobacterium halobium) protein is Dihydrolipoyl dehydrogenase (lpdA).